Here is a 164-residue protein sequence, read N- to C-terminus: Crossover junction endodeoxyribonuclease RuvC (164 aa).

Active-site residues include Asp-7, Glu-67, and Asp-139. Residues Asp-7, Glu-67, and Asp-139 each coordinate Mg(2+).

It belongs to the RuvC family. As to quaternary structure, homodimer which binds Holliday junction (HJ) DNA. The HJ becomes 2-fold symmetrical on binding to RuvC with unstacked arms; it has a different conformation from HJ DNA in complex with RuvA. In the full resolvosome a probable DNA-RuvA(4)-RuvB(12)-RuvC(2) complex forms which resolves the HJ. Requires Mg(2+) as cofactor.

It localises to the cytoplasm. It catalyses the reaction Endonucleolytic cleavage at a junction such as a reciprocal single-stranded crossover between two homologous DNA duplexes (Holliday junction).. Functionally, the RuvA-RuvB-RuvC complex processes Holliday junction (HJ) DNA during genetic recombination and DNA repair. Endonuclease that resolves HJ intermediates. Cleaves cruciform DNA by making single-stranded nicks across the HJ at symmetrical positions within the homologous arms, yielding a 5'-phosphate and a 3'-hydroxyl group; requires a central core of homology in the junction. The consensus cleavage sequence is 5'-(A/T)TT(C/G)-3'. Cleavage occurs on the 3'-side of the TT dinucleotide at the point of strand exchange. HJ branch migration catalyzed by RuvA-RuvB allows RuvC to scan DNA until it finds its consensus sequence, where it cleaves and resolves the cruciform DNA. This Geobacter metallireducens (strain ATCC 53774 / DSM 7210 / GS-15) protein is Crossover junction endodeoxyribonuclease RuvC.